Consider the following 437-residue polypeptide: Epsilon-sarcoglycan (437 aa).

The Extracellular segment spans residues 1-317 (MLLFWWWELG…LKSRDYYTDF (317 aa)). Residue Asn200 is glycosylated (N-linked (GlcNAc...) asparagine). Residues 318–338 (LVTLAVPSAVALVLFLILAYI) traverse the membrane as a helical segment. Topologically, residues 339–437 (MCCRREGVEK…QPQTTGKWYP (99 aa)) are cytoplasmic.

This sequence belongs to the sarcoglycan alpha/epsilon family. Post-translationally, N-glycosylated. In terms of processing, ubiquitinated, leading to its degradation by the proteasome. Identified in all tissues tested. Expression highest in lung and placenta, moderate in brain, heart and skeletal muscle, low in kidney and liver. Also detected in embryo.

It is found in the cell membrane. The protein localises to the sarcolemma. It localises to the golgi apparatus. Its subcellular location is the cell projection. The protein resides in the dendrite. It is found in the cytoplasm. The protein localises to the cytoskeleton. Functionally, component of the sarcoglycan complex, a subcomplex of the dystrophin-glycoprotein complex which forms a link between the F-actin cytoskeleton and the extracellular matrix. The protein is Epsilon-sarcoglycan (Sgce) of Mus musculus (Mouse).